Reading from the N-terminus, the 343-residue chain is Cyclin-Y-like protein 1 (343 aa).

Positions 1–48 (MGNTVTCCVSPDASPKAGRDRAVTERGEPYQAQVELQETDPGPHLQHI) are disordered. Over residues 17–28 (AGRDRAVTERGE) the composition is skewed to basic and acidic residues. In terms of domain architecture, Cyclin N-terminal spans 145–267 (EIFDEKLHPL…FLELLQFNIN (123 aa)).

This sequence belongs to the cyclin family. Cyclin Y subfamily.

Its subcellular location is the cell membrane. In terms of biological role, key regulator of Wnt signaling implicated in various biological processes, such as embryonic neurogenesis. The chain is Cyclin-Y-like protein 1 (ccnyl1) from Xenopus tropicalis (Western clawed frog).